The chain runs to 74 residues: ATP synthase subunit c (74 aa).

2 consecutive transmembrane segments (helical) span residues 8–28 (FIGA…VGNI) and 52–72 (IGFA…LMVL).

The protein belongs to the ATPase C chain family. As to quaternary structure, F-type ATPases have 2 components, F(1) - the catalytic core - and F(0) - the membrane proton channel. F(1) has five subunits: alpha(3), beta(3), gamma(1), delta(1), epsilon(1). F(0) has three main subunits: a(1), b(2) and c(10-14). The alpha and beta chains form an alternating ring which encloses part of the gamma chain. F(1) is attached to F(0) by a central stalk formed by the gamma and epsilon chains, while a peripheral stalk is formed by the delta and b chains.

It localises to the cell inner membrane. Functionally, f(1)F(0) ATP synthase produces ATP from ADP in the presence of a proton or sodium gradient. F-type ATPases consist of two structural domains, F(1) containing the extramembraneous catalytic core and F(0) containing the membrane proton channel, linked together by a central stalk and a peripheral stalk. During catalysis, ATP synthesis in the catalytic domain of F(1) is coupled via a rotary mechanism of the central stalk subunits to proton translocation. In terms of biological role, key component of the F(0) channel; it plays a direct role in translocation across the membrane. A homomeric c-ring of between 10-14 subunits forms the central stalk rotor element with the F(1) delta and epsilon subunits. This chain is ATP synthase subunit c, found in Paramagnetospirillum magneticum (strain ATCC 700264 / AMB-1) (Magnetospirillum magneticum).